The chain runs to 349 residues: Alcohol dehydrogenase 1 (349 aa).

Residues Cys-46, His-69, Cys-100, Cys-103, Cys-106, Cys-114, and Cys-156 each coordinate Zn(2+). NAD(+)-binding positions include 180-186 (GAGGGLG), Asp-204, Lys-208, 270-272 (VGL), and Arg-342.

This sequence belongs to the zinc-containing alcohol dehydrogenase family. Homotetramer. The cofactor is Zn(2+).

It catalyses the reaction a primary alcohol + NAD(+) = an aldehyde + NADH + H(+). The enzyme catalyses a secondary alcohol + NAD(+) = a ketone + NADH + H(+). In Caenorhabditis elegans, this protein is Alcohol dehydrogenase 1.